The sequence spans 475 residues: ADP-ribose glycohydrolase MACROD2 (475 aa).

The region spanning 59–240 (QEAPQMKKSL…IYKKKMNEFF (182 aa)) is the Macro domain. Substrate contacts are provided by residues 77-79 (GDI), 90-92 (AAN), and 97-102 (GGGGVD). Lys170 is covalently cross-linked (Glycyl lysine isopeptide (Lys-Gly) (interchain with G-Cter in ubiquitin)). Substrate is bound by residues 185 to 191 (ISTGIYG) and Phe224. Disordered regions lie at residues 241–306 (PVDD…SQEA) and 324–475 (GVNT…EDLQ). Basic and acidic residues-rich tracts occupy residues 251–261 (ADMKEDSEGPE) and 335–359 (SEDKAEVHKDEDSAKDDNTVKDSDM). Positions 360–375 (TNHSVCDQELPNGQEN) are enriched in polar residues. The span at 376-386 (DSAKSEGKTEA) shows a compositional bias: basic and acidic residues. 2 stretches are compositionally biased toward polar residues: residues 387-402 (ESPSSSMETEDLSPNQ) and 440-469 (SQGSSEAENTSGPDVDMNSQVDGVNEPTES).

This sequence belongs to the MacroD-type family. MacroD1/2-like subfamily. In terms of assembly, interacts with ADP-ribosylated PARP1. As to expression, expressed in the kidney.

It is found in the nucleus. The enzyme catalyses 2''-O-acetyl-ADP-D-ribose + H2O = ADP-D-ribose + acetate + H(+). It catalyses the reaction 4-O-(ADP-D-ribosyl)-L-aspartyl-[protein] + H2O = L-aspartyl-[protein] + ADP-D-ribose + H(+). It carries out the reaction 5-O-(ADP-D-ribosyl)-L-glutamyl-[protein] + H2O = L-glutamyl-[protein] + ADP-D-ribose + H(+). The catalysed reaction is alpha-NAD(+) + H2O = ADP-D-ribose + nicotinamide + H(+). Its activity is regulated as follows. Subject to product inhibition by ADP-ribose. Removes ADP-ribose from aspartate and glutamate residues in proteins bearing a single ADP-ribose moiety. Inactive towards proteins bearing poly-ADP-ribose. Deacetylates O-acetyl-ADP ribose, a signaling molecule generated by the deacetylation of acetylated lysine residues in histones and other proteins. The polypeptide is ADP-ribose glycohydrolase MACROD2 (Mus musculus (Mouse)).